A 375-amino-acid chain; its full sequence is Alcohol dehydrogenase 1 (375 aa).

Position 1 is an N-acetylalanine (alanine 1). Residues cysteine 46, histidine 68, cysteine 98, cysteine 101, cysteine 104, cysteine 112, and cysteine 175 each coordinate Zn(2+). Residues 200-205 (GLGGVG), aspartate 224, lysine 229, 293-295 (VGV), and arginine 370 contribute to the NAD(+) site.

It belongs to the zinc-containing alcohol dehydrogenase family. Class-I subfamily. In terms of assembly, homodimer. The cofactor is Zn(2+).

Its subcellular location is the cytoplasm. It catalyses the reaction a primary alcohol + NAD(+) = an aldehyde + NADH + H(+). The enzyme catalyses a secondary alcohol + NAD(+) = a ketone + NADH + H(+). In Columba livia (Rock dove), this protein is Alcohol dehydrogenase 1.